We begin with the raw amino-acid sequence, 228 residues long: HTH-type transcriptional regulator ArcR (228 aa).

22-141 provides a ligand contact to a nucleoside 3',5'-cyclic phosphate; that stretch reads SYINIPVGVL…VKLFSLLSET (120 aa). In terms of domain architecture, HTH crp-type spans 155 to 228; sequence KLAKERVTKI…SKNWLVSKDL (74 aa). Positions 188–207 form a DNA-binding region, H-T-H motif; the sequence is IQLLSDMAGISRETTSHIIN.

Its subcellular location is the cytoplasm. Positively regulates the expression of the arcABDCR operon under anaerobic conditions, thus playing an essential role in arginine catabolism. May also control the expression of genes encoding proteins which are involved in anaerobic metabolism. Can bind cyclic AMP. The chain is HTH-type transcriptional regulator ArcR (arcR) from Staphylococcus epidermidis (strain ATCC 12228 / FDA PCI 1200).